The primary structure comprises 454 residues: Nuclear envelope integral membrane protein (454 aa).

The N-terminal stretch at 1 to 18 (MHSAGLLMLTVAGYFTSG) is a signal peptide. Residue Asn-38 is glycosylated (N-linked (GlcNAc...) asparagine). 5 helical membrane-spanning segments follow: residues 138–158 (IPLD…LFSA), 166–186 (VFYY…VVIY), 197–217 (MMYG…KQLA), 231–251 (VLGY…RIGP), and 280–300 (TSAV…PISW). A compositionally biased stretch (acidic residues) spans 388–405 (SMDAAPEEESVEEPEEDK). The disordered stretch occupies residues 388-454 (SMDAAPEEES…QEVDLRQVVQ (67 aa)). A compositionally biased stretch (polar residues) spans 414-424 (NSQFRYQQAAR). Positions 428–446 (PEPESESDDSEEEEFFEQE) are enriched in acidic residues.

It belongs to the NEMP family. As to quaternary structure, interacts with OTE. Expressed in both germline and somatic cells in the larval testis and prepupal ovary (at protein level). Also detected in the larval eye and larval wing disk (at protein level).

Its subcellular location is the nucleus inner membrane. Its function is as follows. Contributes to nuclear envelope stiffness in germ cells. Required for male and female fertility. The chain is Nuclear envelope integral membrane protein from Drosophila melanogaster (Fruit fly).